Reading from the N-terminus, the 129-residue chain is Follitropin subunit beta (129 aa).

An N-terminal signal peptide occupies residues 1–18 (MKSVQLCLLLWCWRAICC). Cystine bridges form between cysteine 21–cysteine 69, cysteine 35–cysteine 84, cysteine 38–cysteine 122, cysteine 46–cysteine 100, cysteine 50–cysteine 102, and cysteine 105–cysteine 112. Residues asparagine 25 and asparagine 42 are each glycosylated (N-linked (GlcNAc...) asparagine).

The protein belongs to the glycoprotein hormones subunit beta family. As to quaternary structure, heterodimer. The active follitropin is a heterodimer composed of an alpha chain/CGA shared with other hormones and a unique beta chain/FSHB shown here.

The protein resides in the secreted. In terms of biological role, together with the alpha chain CGA constitutes follitropin, the follicle-stimulating hormone, and provides its biological specificity to the hormone heterodimer. Binds FSHR, a G protein-coupled receptor, on target cells to activate downstream signaling pathways. Follitropin is involved in follicle development and spermatogenesis in reproductive organs. This is Follitropin subunit beta (FSHB) from Meriones unguiculatus (Mongolian jird).